We begin with the raw amino-acid sequence, 359 residues long: tRNA N6-adenosine threonylcarbamoyltransferase (359 aa).

The Fe cation site is built by H115 and H119. Residues 137–141, D170, G183, and N283 contribute to the substrate site; that span reads LVSGG. D311 is a Fe cation binding site. The tract at residues 328–359 is disordered; sequence APDSLDIAPRSRWPLDEKSAPVFGTGRRGAKA.

It belongs to the KAE1 / TsaD family. Fe(2+) serves as cofactor.

It is found in the cytoplasm. The enzyme catalyses L-threonylcarbamoyladenylate + adenosine(37) in tRNA = N(6)-L-threonylcarbamoyladenosine(37) in tRNA + AMP + H(+). Its function is as follows. Required for the formation of a threonylcarbamoyl group on adenosine at position 37 (t(6)A37) in tRNAs that read codons beginning with adenine. Is involved in the transfer of the threonylcarbamoyl moiety of threonylcarbamoyl-AMP (TC-AMP) to the N6 group of A37, together with TsaE and TsaB. TsaD likely plays a direct catalytic role in this reaction. This is tRNA N6-adenosine threonylcarbamoyltransferase from Brucella canis (strain ATCC 23365 / NCTC 10854 / RM-666).